The primary structure comprises 222 residues: L-cystine transport system permease protein TcyL (222 aa).

The Periplasmic portion of the chain corresponds to M1–T22. Positions A19–Q207 constitute an ABC transmembrane type-1 domain. A helical membrane pass occupies residues L23 to M43. Residues R44 to G64 lie on the Cytoplasmic side of the membrane. Residues T65–L85 form a helical membrane-spanning segment. Over D86–T182 the chain is Periplasmic. A helical membrane pass occupies residues L183 to L203. Over S204 to K222 the chain is Cytoplasmic.

It belongs to the binding-protein-dependent transport system permease family. HisMQ subfamily. In terms of assembly, the complex is composed of two ATP-binding proteins (TcyN), two transmembrane proteins (TcyL) and a solute-binding protein (TcyJ).

Its subcellular location is the cell inner membrane. Functionally, part of the ABC transporter complex TcyJLN involved in L-cystine import. Responsible for the translocation of the substrate across the membrane. This Escherichia coli O6:H1 (strain CFT073 / ATCC 700928 / UPEC) protein is L-cystine transport system permease protein TcyL.